Consider the following 201-residue polypeptide: Holliday junction branch migration complex subunit RuvA (201 aa).

The domain I stretch occupies residues 1–63 (MYDYIKGTVT…EDNISLFGFQ (63 aa)). The domain II stretch occupies residues 64 to 142 (TTEERYLFKK…DVVASEIVYV (79 aa)). The interval 143-153 (APENDMVAGLS) is flexible linker. The domain III stretch occupies residues 153–201 (SPQLEEAVLALEALGYSTRELKKVIPKLAKEEDLTSDAYIKLALQLMTK).

It belongs to the RuvA family. In terms of assembly, homotetramer. Forms an RuvA(8)-RuvB(12)-Holliday junction (HJ) complex. HJ DNA is sandwiched between 2 RuvA tetramers; dsDNA enters through RuvA and exits via RuvB. An RuvB hexamer assembles on each DNA strand where it exits the tetramer. Each RuvB hexamer is contacted by two RuvA subunits (via domain III) on 2 adjacent RuvB subunits; this complex drives branch migration. In the full resolvosome a probable DNA-RuvA(4)-RuvB(12)-RuvC(2) complex forms which resolves the HJ.

Its subcellular location is the cytoplasm. The RuvA-RuvB-RuvC complex processes Holliday junction (HJ) DNA during genetic recombination and DNA repair, while the RuvA-RuvB complex plays an important role in the rescue of blocked DNA replication forks via replication fork reversal (RFR). RuvA specifically binds to HJ cruciform DNA, conferring on it an open structure. The RuvB hexamer acts as an ATP-dependent pump, pulling dsDNA into and through the RuvAB complex. HJ branch migration allows RuvC to scan DNA until it finds its consensus sequence, where it cleaves and resolves the cruciform DNA. This chain is Holliday junction branch migration complex subunit RuvA, found in Listeria monocytogenes serotype 4a (strain HCC23).